A 268-amino-acid polypeptide reads, in one-letter code: tRNA pseudouridine synthase A (268 aa).

The active-site Nucleophile is Asp52. Tyr110 contacts substrate.

Belongs to the tRNA pseudouridine synthase TruA family. In terms of assembly, homodimer.

The enzyme catalyses uridine(38/39/40) in tRNA = pseudouridine(38/39/40) in tRNA. In terms of biological role, formation of pseudouridine at positions 38, 39 and 40 in the anticodon stem and loop of transfer RNAs. The protein is tRNA pseudouridine synthase A of Prochlorococcus marinus (strain AS9601).